Reading from the N-terminus, the 432-residue chain is D-amino acid dehydrogenase (432 aa).

3 to 17 (VVILGSGVVGVASAW) contacts FAD.

It belongs to the DadA oxidoreductase family. The cofactor is FAD.

The enzyme catalyses a D-alpha-amino acid + A + H2O = a 2-oxocarboxylate + AH2 + NH4(+). Its pathway is amino-acid degradation; D-alanine degradation; NH(3) and pyruvate from D-alanine: step 1/1. Its function is as follows. Oxidative deamination of D-amino acids. The chain is D-amino acid dehydrogenase from Shigella dysenteriae serotype 1 (strain Sd197).